Consider the following 409-residue polypeptide: Nucleoprotein (409 aa).

5 disordered regions span residues 1 to 32 (MASG…SSGN), 44 to 69 (LNSP…QQHG), 121 to 145 (ADVK…LRFS), 164 to 195 (RSGR…SEGD), and 238 to 259 (VDQV…DKMN). Low complexity predominate over residues 15–31 (PVIKLGGPKPPKVGSSG). The segment at 29-160 (SSGNASWFQA…GNFRWDFIPL (132 aa)) is RNA-binding. Positions 31 to 156 (GNASWFQAIK…GGPDGNFRWD (126 aa)) constitute a CoV N NTD domain. A compositionally biased stretch (low complexity) spans 164 to 179 (RSGRSTAASSAASSRA). Basic and acidic residues-rich tracts occupy residues 180-192 (PSRD…RSGS) and 247-259 (KGKE…DKMN). Phosphoserine; by host is present on residues Ser-190 and Ser-192. The 117-residue stretch at 215–331 (TKAKADEMAH…QCVDGVGTRP (117 aa)) folds into the CoV N CTD domain. The tract at residues 226–333 (RYCKRTIPPG…VDGVGTRPKD (108 aa)) is dimerization. Cys-320 and Cys-323 are oxidised to a cystine. The interval 326–409 (GVGTRPKDDE…GDSALGENEL (84 aa)) is disordered. Residues 341–358 (RSSSRPATRTSSPALRQQ) show a composition bias toward low complexity. The segment covering 368-384 (KQDDEVDKALTSDEERN) has biased composition (basic and acidic residues). Thr-378 is modified (phosphothreonine; by host). Ser-379 is modified (phosphoserine; by host).

It belongs to the gammacoronavirus nucleocapsid protein family. Homooligomer. Both monomeric and oligomeric forms interact with RNA. Interacts with protein M. Interacts with NSP3; this interaction serves to tether the genome to the newly translated replicase-transcriptase complex at a very early stage of infection. In terms of processing, ADP-ribosylated. The ADP-ribosylation is retained in the virion during infection. Post-translationally, phosphorylated on serine and threonine residues.

Its subcellular location is the virion. It is found in the host endoplasmic reticulum-Golgi intermediate compartment. The protein localises to the host Golgi apparatus. In terms of biological role, packages the positive strand viral genome RNA into a helical ribonucleocapsid (RNP) and plays a fundamental role during virion assembly through its interactions with the viral genome and membrane protein M. Plays an important role in enhancing the efficiency of subgenomic viral RNA transcription as well as viral replication. This chain is Nucleoprotein, found in Gallus gallus (Chicken).